The primary structure comprises 149 residues: Ribonuclease pancreatic (149 aa).

Residues 1-25 form the signal peptide; that stretch reads MGLEKSLMLFPLFVLLLGWVQPSLG. Residues 30–49 are disordered; the sequence is AQKFQRQHMDPAGSSSNSPT. Substrate-binding residues include Lys-32 and Arg-35. Catalysis depends on His-37, which acts as the Proton acceptor. 4 disulfides stabilise this stretch: Cys-51/Cys-109, Cys-65/Cys-120, Cys-83/Cys-135, and Cys-90/Cys-97. 66 to 70 lines the substrate pocket; that stretch reads KPVNT. Asn-87 carries an N-linked (GlcNAc...) asparagine glycan. Lys-91 provides a ligand contact to substrate. The Proton donor role is filled by His-144.

It belongs to the pancreatic ribonuclease family. As to quaternary structure, monomer. Interacts with and forms tight 1:1 complexes with RNH1. Dimerization of two such complexes may occur. Interaction with RNH1 inhibits this protein. As to expression, pancreas.

It localises to the secreted. It catalyses the reaction an [RNA] containing cytidine + H2O = an [RNA]-3'-cytidine-3'-phosphate + a 5'-hydroxy-ribonucleotide-3'-[RNA].. The enzyme catalyses an [RNA] containing uridine + H2O = an [RNA]-3'-uridine-3'-phosphate + a 5'-hydroxy-ribonucleotide-3'-[RNA].. Functionally, endonuclease that catalyzes the cleavage of RNA on the 3' side of pyrimidine nucleotides. Acts on single-stranded and double-stranded RNA. This is Ribonuclease pancreatic (Rnase1) from Mus saxicola (Brown spiny mouse).